A 180-amino-acid chain; its full sequence is Sperm protein associated with the nucleus on the X chromosome N2 (180 aa).

Disordered stretches follow at residues 1-46 (MEQP…KTKT) and 64-180 (NSNQ…GGED). Basic and acidic residues predominate over residues 10-26 (GEKRKSPCESNNKKNDE). Residues 82–169 (QEEEDEGLDS…SSQEDEDLDS (88 aa)) are compositionally biased toward acidic residues. The segment covering 170–180 (SEGSSQEGGED) has biased composition (low complexity).

The protein belongs to the SPAN-X family.

This Homo sapiens (Human) protein is Sperm protein associated with the nucleus on the X chromosome N2 (SPANXN2).